Here is a 1161-residue protein sequence, read N- to C-terminus: Cingulin (1161 aa).

The segment at 1-403 is head; it reads MSSLSADRKP…SLIHERFCGV (403 aa). 6 disordered regions span residues 29–53, 79–309, 649–678, 699–721, 739–773, and 1123–1161; these read GGFP…SPSK, SYGV…LGRD, QSEL…KRET, SKAI…ESNL, RLHS…AASR, and QSRR…TTSC. The ZIM signature appears at 51–65; sequence PSKYGVAVRVQGISG. Polar residues-rich tracts occupy residues 84–104 and 117–129; these read LKTQ…SPYN and PQGS…QPSS. Over residues 189–203 the composition is skewed to low complexity; that stretch reads NGIGSSLNGTGLNGS. Positions 273 to 305 are enriched in polar residues; that stretch reads EASSTSPTINPYAPNTSATVPKLNSTKPSSTGS. Residues 413-1128 adopt a coiled-coil conformation; sequence SNMKTELEQA…RKIQQSRRST (716 aa). Positions 742–751 are enriched in low complexity; it reads SSVPDSSSSD. Residues 755 to 773 show a composition bias toward basic and acidic residues; the sequence is EENRSLKTQLEESRRAASR. The tail stretch occupies residues 1122 to 1161; the sequence is QQSRRSTLGSTLSSDEEDNYSDTKSITSILTDSPLQTTSC. The span at 1124–1134 shows a compositional bias: low complexity; that stretch reads SRRSTLGSTLS. Residues 1143–1161 show a composition bias toward polar residues; sequence DTKSITSILTDSPLQTTSC.

It belongs to the cingulin family. As to quaternary structure, homodimer.

The protein resides in the cell junction. The protein localises to the tight junction. Its function is as follows. Probably plays a role in the formation and regulation of the tight junction (TJ) paracellular permeability barrier. Note=Localizes to the apical junction complex composed of tight and adherens junctions. In Danio rerio (Zebrafish), this protein is Cingulin.